Reading from the N-terminus, the 37-residue chain is Hemextin A (37 aa).

Heterotetramer composed of two A and two B chains; non-covalently linked. Does not exist as a complex in the crude venom. In terms of processing, may contain several disulfide bonds. Expressed by the venom gland.

The protein resides in the secreted. Functionally, hemextin A (monomer): exhibits mild anticoagulant activity. It specifically inhibits the activation of FX (F10) by the TF-FVIIa complex (extrinsic tenase complex (ETC)) by non-competitively inhibiting the enzymatic activity of FVIIa. In terms of biological role, hemextin AB complex: specifically inhibits the activation of FX (F10) by the TF-FVIIa complex (extrinsic tenase complex (ETC)) (IC(50)= 100 nM, Ki=25 nM) by non-competitively inhibiting the enzymatic activity of FVIIa. This chain is Hemextin A, found in Hemachatus haemachatus (Rinkhals).